Consider the following 166-residue polypeptide: Lithostathine-1-beta (166 aa).

The first 22 residues, 1–22 (MAQTNSFFMLISSLMFLSLSQG), serve as a signal peptide directing secretion. O-linked (GalNAc...) threonine glycosylation occurs at threonine 27. One can recognise a C-type lectin domain in the interval 34–164 (ISCPEGTNAY…EKKFSFVCKF (131 aa)). 3 cysteine pairs are disulfide-bonded: cysteine 36/cysteine 47, cysteine 64/cysteine 162, and cysteine 137/cysteine 154.

All O-linked glycans consist of Gal-GlcNAc-Gal-GalNAc tetrasaccharide core and get elongated (microheterogeneity).

It is found in the secreted. Functionally, might act as an inhibitor of spontaneous calcium carbonate precipitation. May be associated with neuronal sprouting in brain, and with brain and pancreas regeneration. In Homo sapiens (Human), this protein is Lithostathine-1-beta (REG1B).